A 333-amino-acid chain; its full sequence is Calcium uniporter protein, mitochondrial (333 aa).

Residues 1-22 (MRNGRCLVTPFVTAQRLANLRN) constitute a mitochondrion transit peptide. Residues 23–214 (TLWNRQQIAF…QECEAHTDRV (192 aa)) lie on the Mitochondrial matrix side of the membrane. Residues 180-193 (KKLLLQLENAETLL) are a coiled coil. The outer juxtamembrane helix (OJMH) stretch occupies residues 195-213 (PLHDAKRKIEQECEAHTDR). Residues 215 to 234 (MWAGFAAMGVQTGLFARLTW) form a helical membrane-spanning segment. Residues 235–243 (WEYSWDIME) are Mitochondrial intermembrane-facing. The Selectivity filter signature appears at 239–247 (WDIMEPVTY). Glu243 is a Ca(2+) binding site. A helical membrane pass occupies residues 244 to 260 (PVTYFATYSTVCATFGY). Residues 261-333 (YLYTQQSFEY…SYLSNLEAEK (73 aa)) lie on the Mitochondrial matrix side of the membrane. Residues 262 to 271 (LYTQQSFEYP) are inner juxtamembrane helix (IJMH). The stretch at 289-316 (QNFDIEKYNRLVTEVDELRNQLKRMRDP) forms a coiled coil.

The protein belongs to the MCU (TC 1.A.77) family.

Its subcellular location is the mitochondrion inner membrane. It carries out the reaction Ca(2+)(in) = Ca(2+)(out). Its activity is regulated as follows. Inhibited by ruthenium red or its derivative Ru360; possibly by obstructing the pore. In terms of biological role, mitochondrial inner membrane calcium uniporter that mediates calcium uptake into mitochondria. Constitutes a pore-forming and calcium-conducting subunit. Mitochondrial calcium homeostasis plays key roles in cellular physiology and regulates cell bioenergetics, cytoplasmic calcium signals and activation of cell death pathways. Required for rapid mitochondrial calcium uptake and mitochondrial reactive oxygen species (mtROS) production after wounding. In addition, together with mitochondrial calcium regulator micu-1, required for mitochondrial calcium uptake following axon injury in PLM touch receptor neurons. The polypeptide is Calcium uniporter protein, mitochondrial (Caenorhabditis elegans).